The primary structure comprises 675 residues: Cysteine-rich receptor-like protein kinase 25 (675 aa).

The first 25 residues, 1 to 25 (MSSCFKSSVSLFSVFLFMILKTVTS), serve as a signal peptide directing secretion. At 26–281 (DPTYLYHICP…IPSEKGKGKN (256 aa)) the chain is on the extracellular side. 2 Gnk2-homologous domains span residues 28-134 (TYLY…NQSI) and 140-247 (IRPG…LYPF). Asparagine 36, asparagine 43, asparagine 77, asparagine 106, asparagine 131, asparagine 151, asparagine 161, asparagine 188, asparagine 249, and asparagine 281 each carry an N-linked (GlcNAc...) asparagine glycan. The chain crosses the membrane as a helical span at residues 282-302 (LTVIVTAIAVPVSVCVLLLGA). Topologically, residues 303 to 675 (MCWLLARRRN…DSSITIVYPR (373 aa)) are cytoplasmic. In terms of domain architecture, Protein kinase spans 347-622 (FSESNKLGHG…DILVMMNSFT (276 aa)). ATP contacts are provided by residues 353–361 (LGHGGFGEV) and lysine 375. A Phosphotyrosine modification is found at tyrosine 420. Catalysis depends on aspartate 472, which acts as the Proton acceptor. Position 476 is a phosphoserine (serine 476). Phosphothreonine is present on threonine 512. Tyrosine 520 is modified (phosphotyrosine). The interval 638–661 (MKDSRDPRSGGSASDHSATSKSLP) is disordered. The span at 648–661 (GSASDHSATSKSLP) shows a compositional bias: polar residues.

The protein belongs to the protein kinase superfamily. Ser/Thr protein kinase family. CRK subfamily.

It is found in the membrane. It catalyses the reaction L-seryl-[protein] + ATP = O-phospho-L-seryl-[protein] + ADP + H(+). It carries out the reaction L-threonyl-[protein] + ATP = O-phospho-L-threonyl-[protein] + ADP + H(+). The polypeptide is Cysteine-rich receptor-like protein kinase 25 (CRK25) (Arabidopsis thaliana (Mouse-ear cress)).